The sequence spans 355 residues: Uroporphyrinogen decarboxylase (355 aa).

Substrate contacts are provided by residues 27–31, D77, Y154, T209, and H327; that span reads RQAGR.

It belongs to the uroporphyrinogen decarboxylase family. As to quaternary structure, homodimer.

Its subcellular location is the cytoplasm. It catalyses the reaction uroporphyrinogen III + 4 H(+) = coproporphyrinogen III + 4 CO2. It participates in porphyrin-containing compound metabolism; protoporphyrin-IX biosynthesis; coproporphyrinogen-III from 5-aminolevulinate: step 4/4. In terms of biological role, catalyzes the decarboxylation of four acetate groups of uroporphyrinogen-III to yield coproporphyrinogen-III. This Tolumonas auensis (strain DSM 9187 / NBRC 110442 / TA 4) protein is Uroporphyrinogen decarboxylase.